Consider the following 139-residue polypeptide: Large ribosomal subunit protein uL16 (139 aa).

The protein belongs to the universal ribosomal protein uL16 family. Part of the 50S ribosomal subunit.

In terms of biological role, binds 23S rRNA and is also seen to make contacts with the A and possibly P site tRNAs. In Neorickettsia sennetsu (strain ATCC VR-367 / Miyayama) (Ehrlichia sennetsu), this protein is Large ribosomal subunit protein uL16 (rplP).